A 194-amino-acid polypeptide reads, in one-letter code: tRNA (pseudouridine(54)-N(1))-methyltransferase (194 aa).

Leucine 125 contacts S-adenosyl-L-methionine.

It belongs to the methyltransferase superfamily. TrmY family. As to quaternary structure, homodimer.

It localises to the cytoplasm. It catalyses the reaction pseudouridine(54) in tRNA + S-adenosyl-L-methionine = N(1)-methylpseudouridine(54) in tRNA + S-adenosyl-L-homocysteine + H(+). Specifically catalyzes the N1-methylation of pseudouridine at position 54 (Psi54) in tRNAs. The polypeptide is tRNA (pseudouridine(54)-N(1))-methyltransferase (Methanospirillum hungatei JF-1 (strain ATCC 27890 / DSM 864 / NBRC 100397 / JF-1)).